The chain runs to 173 residues: ATP-dependent protease subunit HslV (173 aa).

The active site involves Thr-2. Residues Gly-158, Asp-161, and Thr-164 each coordinate Na(+).

This sequence belongs to the peptidase T1B family. HslV subfamily. A double ring-shaped homohexamer of HslV is capped on each side by a ring-shaped HslU homohexamer. The assembly of the HslU/HslV complex is dependent on binding of ATP.

The protein localises to the cytoplasm. It carries out the reaction ATP-dependent cleavage of peptide bonds with broad specificity.. Its activity is regulated as follows. Allosterically activated by HslU binding. Its function is as follows. Protease subunit of a proteasome-like degradation complex believed to be a general protein degrading machinery. In Mannheimia succiniciproducens (strain KCTC 0769BP / MBEL55E), this protein is ATP-dependent protease subunit HslV.